The primary structure comprises 296 residues: uncharacterized protein (296 aa).

The first 20 residues, methionine 1–alanine 20, serve as a signal peptide directing secretion.

This is an uncharacterized protein from Rickettsia felis (strain ATCC VR-1525 / URRWXCal2) (Rickettsia azadi).